The following is a 409-amino-acid chain: Tryptophan synthase beta chain (409 aa).

An N6-(pyridoxal phosphate)lysine modification is found at Lys100.

The protein belongs to the TrpB family. Tetramer of two alpha and two beta chains. Pyridoxal 5'-phosphate is required as a cofactor.

The enzyme catalyses (1S,2R)-1-C-(indol-3-yl)glycerol 3-phosphate + L-serine = D-glyceraldehyde 3-phosphate + L-tryptophan + H2O. It functions in the pathway amino-acid biosynthesis; L-tryptophan biosynthesis; L-tryptophan from chorismate: step 5/5. Its function is as follows. The beta subunit is responsible for the synthesis of L-tryptophan from indole and L-serine. In Pyrobaculum arsenaticum (strain DSM 13514 / JCM 11321 / PZ6), this protein is Tryptophan synthase beta chain.